The primary structure comprises 216 residues: Thiopurine S-methyltransferase (216 aa).

Trp11, Leu46, Glu67, and Arg122 together coordinate S-adenosyl-L-methionine.

It belongs to the class I-like SAM-binding methyltransferase superfamily. TPMT family.

Its subcellular location is the cytoplasm. The catalysed reaction is S-adenosyl-L-methionine + a thiopurine = S-adenosyl-L-homocysteine + a thiopurine S-methylether.. This is Thiopurine S-methyltransferase from Vibrio campbellii (strain ATCC BAA-1116).